We begin with the raw amino-acid sequence, 1408 residues long: Palladin (1408 aa).

The segment at 69–229 (SKSPISLCET…SASQSPTADQ (161 aa)) is disordered. Polar residues-rich tracts occupy residues 149-169 (PNPS…QSQL) and 193-229 (RSPN…TADQ). Serine 194 carries the phosphoserine modification. Ig-like C2-type domains lie at 278–367 (PRFI…AEVF) and 448–546 (PVFT…LVIT). 2 disulfides stabilise this stretch: cysteine 299/cysteine 351 and cysteine 469/cysteine 528. The interval 569–573 (FPPPP) is interaction with VASP. 2 disordered regions span residues 631-660 (NGKA…LAKP) and 687-727 (PPGV…VPSE). Phosphoserine is present on serine 639. Phosphothreonine is present on threonine 642. Serine 648 is subject to Phosphoserine. The segment at 653–683 (PPPLLAKPKLDPLKLQQLQNQVRLEQEACAW) is interaction with LASP1. Residues 683-713 (WPPAPPGVPCNSSSSGSSAPPSPPFPPPPPA) are interaction with SORBS2, SPIN90 and SRC. The span at 691–701 (PCNSSSSGSSA) shows a compositional bias: low complexity. Serine 700, serine 704, and serine 744 each carry phosphoserine. Residues 702-714 (PPSPPFPPPPPAF) are compositionally biased toward pro residues. Disordered regions lie at residues 758–854 (NLGP…RFGP), 882–904 (KGVT…SDEE), and 960–981 (ETAA…LDGQ). The segment covering 765–779 (LPTPTSSPSSSSLPS) has biased composition (low complexity). 3 stretches are compositionally biased toward pro residues: residues 780–797 (PLSP…PPFV), 807–818 (SPSPPPPPPPVF), and 828–840 (DVFP…PPLP). The interval 782-842 (SPTPRPFGRA…PPPPPPLPSS (61 aa)) is interaction with EPS8. Residues 807–842 (SPSPPPPPPPVFSPSAAYPVPDVFPLPPPPPPLPSS) are interaction with SORBS2, SPIN90, SRC and PFN1. An interaction with VASP region spans residues 830–834 (FPLPP). A Phosphoserine modification is found at serine 901. Serine 1004 and serine 1009 each carry phosphoserine. The 85-residue stretch at 1026 to 1110 (PFFEMKLKHY…MAANPQGRVS (85 aa)) folds into the Ig-like C2-type 3 domain. Residues 1121–1150 (NQRGRSPRSPSGHPHARRPRSRSRDSGDEN) form a disordered region. The span at 1123–1133 (RGRSPRSPSGH) shows a compositional bias: low complexity. Residues serine 1126, serine 1129, serine 1131, and serine 1141 each carry the phosphoserine modification. Phosphoserine; by PKB/AKT1 is present on serine 1143. The residue at position 1146 (serine 1146) is a Phosphoserine. Ig-like C2-type domains lie at 1160 to 1251 (PHFL…LVVA) and 1259 to 1349 (PVFM…ARLD). Interaction with EZR stretches follow at residues 1162–1251 (FLQA…LVVA) and 1261–1351 (FMEK…LDVY). A disulfide bridge links cysteine 1181 with cysteine 1233. The residue at position 1377 (serine 1377) is a Phosphoserine.

This sequence belongs to the myotilin/palladin family. Interacts with EPS8. Interacts with LASP1. Interacts with VASP. Interacts with ACTN. Interacts with SORBS2. Interacts with PFN1. Interacts with LPP. Interacts with SPIN90. Interacts with SRC. Interacts with EZR. Interacts with RAI14. Post-translationally, phosphorylated predominantly on serines and, to a lesser extent, on tyrosines. Phosphorylation at Ser-1143 by PKB/AKT1 modulates cytoskeletal organization and cell motility. As to expression, detected in both muscle and non-muscle tissues and cells (at protein level). Isoform 3 is widely expressed, isoform 4 is particularly abundant in tissues rich in smooth muscle and in the cardiac muscle and isoform 1 is detected in heart.

It is found in the cytoplasm. It localises to the cytoskeleton. The protein localises to the cell junction. The protein resides in the focal adhesion. Its subcellular location is the myofibril. It is found in the sarcomere. It localises to the z line. The protein localises to the cell projection. The protein resides in the ruffle. Its subcellular location is the podosome. It is found in the lamellipodium. It localises to the axon. The protein localises to the growth cone. In terms of biological role, cytoskeletal protein required for organization of normal actin cytoskeleton. Roles in establishing cell morphology, motility, cell adhesion and cell-extracellular matrix interactions in a variety of cell types. May function as a scaffolding molecule with the potential to influence both actin polymerization and the assembly of existing actin filaments into higher-order arrays. Binds to proteins that bind to either monomeric or filamentous actin. Localizes at sites where active actin remodeling takes place, such as lamellipodia and membrane ruffles. Different isoforms may have functional differences. Involved in the control of morphological and cytoskeletal changes associated with dendritic cell maturation. Involved in targeting ACTN to specific subcellular locations. May be required for the initiation of neural tube closure. The protein is Palladin (Palld) of Mus musculus (Mouse).